The sequence spans 119 residues: Venom allergen 2 (119 aa).

The protein belongs to the ant venom allergen 2/4 family. In terms of assembly, homodimer; disulfide-linked. In terms of tissue distribution, expressed by the venom gland.

Its subcellular location is the secreted. The protein is Venom allergen 2 of Solenopsis richteri (Black imported fire ant).